The chain runs to 496 residues: Galactokinase (496 aa).

Alanine 2 carries the post-translational modification N-acetylalanine. Arginine 56, glutamate 62, histidine 63, and aspartate 65 together coordinate alpha-D-galactose. Glycine 161, glycine 163, serine 165, and serine 166 together coordinate ATP. Aspartate 210 lines the alpha-D-galactose pocket. Catalysis depends on aspartate 210, which acts as the Proton acceptor. Residues serine 252, glutamine 253, and lysine 254 each coordinate ATP. Residue tyrosine 262 coordinates alpha-D-galactose.

The protein belongs to the GHMP kinase family. GalK subfamily. The cofactor is Mg(2+). Requires Mn(2+) as cofactor. It depends on Ca(2+) as a cofactor. Expressed in roots, stems, leaves, flowers and young siliques. Higher expression in the elongating middle stem region than in the lower or upper stem region.

The enzyme catalyses alpha-D-galactose + ATP = alpha-D-galactose 1-phosphate + ADP + H(+). The protein operates within carbohydrate metabolism; galactose metabolism. Its function is as follows. Sugar-1-kinase with a very high substrate specificity for the alpha-anomeric configuration of D-galacose (D-Gal). Also efficiently converts 2-deoxy-D-Gal to 2-deoxy-D-al-1-phosphate. This chain is Galactokinase (GAL1), found in Arabidopsis thaliana (Mouse-ear cress).